The following is a 234-amino-acid chain: bZIP transcription factor 27 (234 aa).

A Nuclear localization signal motif is present at residues 152–159 (KKRGQDSD). Residues 163-213 (GDRRYKRMIKNRESAARSRARKQAYTNELELEIAHLQTENARLKIQQEQLK) enclose the bZIP domain. The segment at 165–184 (RRYKRMIKNRESAARSRARK) is basic motif. A leucine-zipper region spans residues 191 to 212 (LELEIAHLQTENARLKIQQEQL). The residue at position 231 (Thr-231) is a Phosphothreonine.

Belongs to the bZIP family. As to quaternary structure, self-interacts. Interacts with FT and FD/BZIP14. Interacts with CPK33. In terms of processing, phosphorylated. In terms of tissue distribution, expressed on the flanks of the shoot apex.

The protein resides in the nucleus. Transcription factor required for the transition to flowering promoted by FT. This chain is bZIP transcription factor 27, found in Arabidopsis thaliana (Mouse-ear cress).